The following is a 358-amino-acid chain: Magnesium-protoporphyrin IX monomethyl ester [oxidative] cyclase 1 (358 aa).

The protein belongs to the AcsF family. Requires Fe cation as cofactor.

The catalysed reaction is Mg-protoporphyrin IX 13-monomethyl ester + 3 NADPH + 3 O2 + 2 H(+) = 3,8-divinyl protochlorophyllide a + 3 NADP(+) + 5 H2O. The protein operates within porphyrin-containing compound metabolism; chlorophyll biosynthesis (light-independent). Its function is as follows. Catalyzes the formation of the isocyclic ring in chlorophyll biosynthesis. Mediates the cyclase reaction, which results in the formation of divinylprotochlorophyllide (Pchlide) characteristic of all chlorophylls from magnesium-protoporphyrin IX 13-monomethyl ester (MgPMME). The chain is Magnesium-protoporphyrin IX monomethyl ester [oxidative] cyclase 1 from Synechocystis sp. (strain ATCC 27184 / PCC 6803 / Kazusa).